The following is a 401-amino-acid chain: Acetate kinase (401 aa).

Asn9 provides a ligand contact to Mg(2+). Lys16 serves as a coordination point for ATP. Residue Arg88 coordinates substrate. The Proton donor/acceptor role is filled by Asp147. Residues 207–211, 282–284, and 333–337 contribute to the ATP site; these read HLGNG, DCR, and GIGEN. Glu388 serves as a coordination point for Mg(2+).

It belongs to the acetokinase family. Homodimer. Mg(2+) serves as cofactor. The cofactor is Mn(2+).

The protein resides in the cytoplasm. It carries out the reaction acetate + ATP = acetyl phosphate + ADP. It functions in the pathway metabolic intermediate biosynthesis; acetyl-CoA biosynthesis; acetyl-CoA from acetate: step 1/2. Catalyzes the formation of acetyl phosphate from acetate and ATP. Can also catalyze the reverse reaction. The sequence is that of Acetate kinase from Haemophilus influenzae (strain 86-028NP).